Here is a 436-residue protein sequence, read N- to C-terminus: Histone acetyltransferase type B subunit 2 (436 aa).

Residues 1–19 (MEPYDDGFIEEQEEQEEER) are compositionally biased toward acidic residues. A disordered region spans residues 1–22 (MEPYDDGFIEEQEEQEEERTEE). 5 WD repeats span residues 136–176 (DHKG…SLPT), 187–227 (GHTK…KGNK), 237–277 (HHSS…TTRA), 284–324 (QHRD…TKLH), and 328–368 (CHTD…EEQT). Residues 370 to 374 (DDAQD) are interaction with the histone H4 N-terminus. The WD 6 repeat unit spans residues 385–425 (GHTNRISDFSWNLNDPWVLCSAAEDNLLQVWKVADAIVGKD).

This sequence belongs to the WD repeat RBAP46/RBAP48/MSI1 family. As to quaternary structure, component of the HAT-B complex composed of at least hat1 and hat2. The HAT-B complex binds to histone H4 tail.

It localises to the cytoplasm. It is found in the nucleus. Functionally, regulatory subunit of the histone acetylase B (HAT-B) complex. The complex acetylates 'Lys-12' of histone H4 which is required for telomeric silencing. This chain is Histone acetyltransferase type B subunit 2 (hat2), found in Aspergillus oryzae (strain ATCC 42149 / RIB 40) (Yellow koji mold).